Reading from the N-terminus, the 288-residue chain is MSQISAKDVKDLRDTTGIGMMDCKKALEETGGDMEKAIEYLRKKGAALAAKRAEKDASEGMICIRVSADRKSGVILELNCETDFVARGEVFTGFAGALGDLALENRTVSTDALLKLRMADAMGGELVDDAIKTMTGKLGEKIDLKRLFFFDAADGLVESYVHPGAQLGAIIHLATDKPEAVAPLAKDLAMQVAAAAPIEVDRSAVPQELIAKESEIYRQQALGQGKKEEFVDKIVLGRLDKYYQEVVLLEQSFIKSNNMKVSAVLDEFRKLLQAAVDVKEFVRYQLGE.

An involved in Mg(2+) ion dislocation from EF-Tu region spans residues 82–85 (TDFV).

Belongs to the EF-Ts family.

It localises to the cytoplasm. Associates with the EF-Tu.GDP complex and induces the exchange of GDP to GTP. It remains bound to the aminoacyl-tRNA.EF-Tu.GTP complex up to the GTP hydrolysis stage on the ribosome. The chain is Elongation factor Ts from Chlorobium luteolum (strain DSM 273 / BCRC 81028 / 2530) (Pelodictyon luteolum).